The chain runs to 227 residues: Urease accessory protein UreF (227 aa).

This sequence belongs to the UreF family. In terms of assembly, ureD, UreF and UreG form a complex that acts as a GTP-hydrolysis-dependent molecular chaperone, activating the urease apoprotein by helping to assemble the nickel containing metallocenter of UreC. The UreE protein probably delivers the nickel.

It localises to the cytoplasm. In terms of biological role, required for maturation of urease via the functional incorporation of the urease nickel metallocenter. The sequence is that of Urease accessory protein UreF from Actinobacillus pleuropneumoniae serotype 5b (strain L20).